Consider the following 187-residue polypeptide: Putative manganese efflux pump MntP (187 aa).

Transmembrane regions (helical) follow at residues phenylalanine 8–isoleucine 28, isoleucine 39–leucine 59, leucine 65–isoleucine 85, leucine 106–valine 126, isoleucine 131–phenylalanine 151, and isoleucine 166–isoleucine 186.

This sequence belongs to the MntP (TC 9.B.29) family.

The protein localises to the cell inner membrane. In terms of biological role, probably functions as a manganese efflux pump. The sequence is that of Putative manganese efflux pump MntP from Rippkaea orientalis (strain PCC 8801 / RF-1) (Cyanothece sp. (strain PCC 8801)).